The primary structure comprises 344 residues: S-methyl-5'-thioadenosine phosphorylase (344 aa).

Residues Thr-45, 88-89 (RH), and 121-122 (SA) each bind phosphate. Met-238 contacts substrate. Residue Ser-239 participates in phosphate binding. 262 to 264 (DYD) contributes to the substrate binding site.

Belongs to the PNP/MTAP phosphorylase family. MTAP subfamily. Homotrimer.

The protein localises to the cytoplasm. The protein resides in the nucleus. The enzyme catalyses S-methyl-5'-thioadenosine + phosphate = 5-(methylsulfanyl)-alpha-D-ribose 1-phosphate + adenine. It functions in the pathway amino-acid biosynthesis; L-methionine biosynthesis via salvage pathway; S-methyl-5-thio-alpha-D-ribose 1-phosphate from S-methyl-5'-thioadenosine (phosphorylase route): step 1/1. Its function is as follows. Catalyzes the reversible phosphorylation of S-methyl-5'-thioadenosine (MTA) to adenine and 5-methylthioribose-1-phosphate. Involved in the breakdown of MTA, a major by-product of polyamine biosynthesis. Responsible for the first step in the methionine salvage pathway after MTA has been generated from S-adenosylmethionine. Has broad substrate specificity with 6-aminopurine nucleosides as preferred substrates. This is S-methyl-5'-thioadenosine phosphorylase from Candida albicans (strain WO-1) (Yeast).